A 122-amino-acid polypeptide reads, in one-letter code: Large ribosomal subunit protein uL14 (122 aa).

The protein belongs to the universal ribosomal protein uL14 family. Part of the 50S ribosomal subunit. Forms a cluster with proteins L3 and L19. In the 70S ribosome, L14 and L19 interact and together make contacts with the 16S rRNA in bridges B5 and B8.

Functionally, binds to 23S rRNA. Forms part of two intersubunit bridges in the 70S ribosome. The chain is Large ribosomal subunit protein uL14 from Pseudomonas aeruginosa (strain LESB58).